The following is a 588-amino-acid chain: MMRTHYCGALNRDNIGQEVTLSGWVHRRRDLGGLIFIDMRDREGIVQVCFDPVYQEALTTAASLRNEFCIQIKGEVIARPDNQINKNMATGEVEVLAKSLSIYNSAEPLPLDFNQNNTEEQRLKYRYLDLRRPEMAQRLKTRAKITSFVRRFMDEHGFLDIETPMLTKATPEGARDYLVPSRVHKGKFYALPQSPQLFKQLLMMSGFDRYYQIVKCFRDEDLRADRQPEFTQIDVETSFLTAPEVREIMEKMVHGLWRETLGVDLGKFPVMTFAEAMRRFGSDKPDLRNPLEMVDVADLLKEVEFKVFNGPANDPNGRIAVIRVPNGTDITRKQIDEYTQFVGIYGAKGLAWLKVNDLAAGMDGVQSPIAKFLSEAVLKALLERVQAQNGDILFFGADNYKVTTDAMGALRLKLGRDLGLTKLEEWQPLWVIDFPMFERDDEGDLAAMHHPFTSPKDFSPEQLEADPTSAVANAYDMVINGYEVGGGSVRIFDPKMQQTVFRILGINEAEQREKFGFLLDALKFGTPPHAGLAFGLDRLTMLLTGTDNIRDVIAFPKTTAAACLMTEAPSFANPQALNELSVQVIKSE.

E172 serves as a coordination point for L-aspartate. Residues 196 to 199 (QLFK) form an aspartate region. R218 contacts L-aspartate. Residues 218 to 220 (RDE) and Q227 each bind ATP. Position 449 (H449) interacts with L-aspartate. ATP is bound at residue E483. R490 is an L-aspartate binding site. 535-538 (GLDR) serves as a coordination point for ATP.

It belongs to the class-II aminoacyl-tRNA synthetase family. Type 1 subfamily. In terms of assembly, homodimer.

It localises to the cytoplasm. The enzyme catalyses tRNA(Asp) + L-aspartate + ATP = L-aspartyl-tRNA(Asp) + AMP + diphosphate. In terms of biological role, catalyzes the attachment of L-aspartate to tRNA(Asp) in a two-step reaction: L-aspartate is first activated by ATP to form Asp-AMP and then transferred to the acceptor end of tRNA(Asp). This Pasteurella multocida (strain Pm70) protein is Aspartate--tRNA ligase.